Reading from the N-terminus, the 246-residue chain is Probable transcriptional regulatory protein Ent638_2432 (246 aa).

The protein belongs to the TACO1 family.

It localises to the cytoplasm. The protein is Probable transcriptional regulatory protein Ent638_2432 of Enterobacter sp. (strain 638).